The following is a 37-amino-acid chain: Large ribosomal subunit protein bL36c (37 aa).

This sequence belongs to the bacterial ribosomal protein bL36 family.

Its subcellular location is the plastid. It is found in the chloroplast. In Angiopteris evecta (Mule's foot fern), this protein is Large ribosomal subunit protein bL36c.